The primary structure comprises 388 residues: 4-hydroxycoumarin synthase 2 (388 aa).

Cysteine 159 is a catalytic residue.

The protein belongs to the thiolase-like superfamily. Chalcone/stilbene synthases family. In terms of assembly, homodimer.

The enzyme catalyses 2-hydroxybenzoyl-CoA + malonyl-CoA = 4-hydroxycoumarin + CO2 + 2 CoA. In terms of biological role, type III polyketide synthase involved preferentially in the biosynthesis of 4-hydroxycoumarin from salicoyl-CoA. Can also use benzoyl-CoA and malonyl-CoA to produce 3,5-dihydroxybiphenyl as a major product and benzoyldiacetic acid lactone as a minor side product. Can also use m-hydroxybenzoyl-CoA as substrate, producing m-hydroxybenzoyl diacetic acid lactone as a derailment product. No activity with p-hydroxybenzoyl-CoA, CoA-linked cinnamic acids or acetyl-CoA. This Sorbus aucuparia (European mountain ash) protein is 4-hydroxycoumarin synthase 2 (BIS3).